Reading from the N-terminus, the 160-residue chain is Cyclic pyranopterin monophosphate synthase (160 aa).

Residues 76-78 (MCH) and 113-114 (ME) each bind substrate. Asp128 is a catalytic residue.

It belongs to the MoaC family. As to quaternary structure, homohexamer; trimer of dimers.

The catalysed reaction is (8S)-3',8-cyclo-7,8-dihydroguanosine 5'-triphosphate = cyclic pyranopterin phosphate + diphosphate. It functions in the pathway cofactor biosynthesis; molybdopterin biosynthesis. Catalyzes the conversion of (8S)-3',8-cyclo-7,8-dihydroguanosine 5'-triphosphate to cyclic pyranopterin monophosphate (cPMP). This chain is Cyclic pyranopterin monophosphate synthase, found in Brevibacillus brevis (strain 47 / JCM 6285 / NBRC 100599).